The following is a 116-amino-acid chain: UPF0482 protein ECA2253 (116 aa).

The first 31 residues, 1–31 (MNHYSFSSLIRALIPLSLVIVSAVWQPAALA), serve as a signal peptide directing secretion.

It belongs to the UPF0482 family.

The sequence is that of UPF0482 protein ECA2253 from Pectobacterium atrosepticum (strain SCRI 1043 / ATCC BAA-672) (Erwinia carotovora subsp. atroseptica).